Consider the following 239-residue polypeptide: MRGILIAIEGINGVGKSTQAMRLKKALECMDYNAVCIRFPNPDTTTGDLILQVLNKMIEMSSEQLHKLFTKHCSEFVAEIAALLKLNFIVIVDRYIWSGLAYAQADGITIETKNTFKPDYTFFLSSKKPLNEKPLTLQRLFETKEKQETIFTNFTIIMNDVPKNRLCTIPATLNKEIIHTMILTKTIKVFDNNSCLNYIKMYDDKYLNVQELNLFDFEWQKCIEDNNDKEEYDDDDFIV.

10–17 (GINGVGKS) is a binding site for ATP.

This sequence belongs to the thymidylate kinase family.

It carries out the reaction dTMP + ATP = dTDP + ADP. The protein operates within pyrimidine metabolism; dTTP biosynthesis. Functionally, catalyzes the conversion of dTMP to dTDP. In African swine fever virus (isolate Warthog/Namibia/Wart80/1980) (ASFV), this protein is Thymidylate kinase (TMK).